Consider the following 295-residue polypeptide: Small ribosomal subunit protein uS2 (295 aa).

N-acetylserine is present on Ser-2. Ser-43 carries the phosphoserine modification. Lys-52 is subject to N6-acetyllysine. The tract at residues 54 to 113 (TWEKLLLAARAIVAIENPADVSVISSRNTGQRAVLKFAAATGATPIAGRFTPGTFTNQIQ) is interaction with PPP1R16B. The residue at position 89 (Lys-89) is an N6-acetyllysine; alternate. Lys-89 is covalently cross-linked (Glycyl lysine isopeptide (Lys-Gly) (interchain with G-Cter in SUMO2); alternate). Phosphothreonine is present on Thr-97. Laminin-binding regions lie at residues 161-180 (IPCN…MLAR) and 205-229 (RDPE…EFQG). A compositionally biased stretch (basic and acidic residues) spans 214 to 227 (EQAAAEKAVTKEEF). Residues 214-240 (EQAAAEKAVTKEEFQGEWTAPAPEFTA) form a disordered region. [DE]-W-[ST] repeat units follow at residues 230–232 (EWT), 247–249 (DWS), 266–268 (DWS), and 275–277 (DWS). A laminin-binding region spans residues 242 to 295 (QPEVADWSEGVQVPSVPIQQFPTEDWSARPFTEDWSAAPTAQATEWVGTTSELS). The disordered stretch occupies residues 263-295 (PTEDWSARPFTEDWSAAPTAQATEWVGTTSELS). A compositionally biased stretch (polar residues) spans 280–295 (PTAQATEWVGTTSELS).

Belongs to the universal ribosomal protein uS2 family. As to quaternary structure, monomer (37LRP) and homodimer (67LR). Component of the small ribosomal subunit. Mature ribosomes consist of a small (40S) and a large (60S) subunit. The 40S subunit contains about 33 different proteins and 1 molecule of RNA (18S). The 60S subunit contains about 49 different proteins and 3 molecules of RNA (28S, 5.8S and 5S). Interacts with RPS21. Interacts with several laminins including at least LAMB1. Interacts with MDK. The mature dimeric form interacts with PPP1R16B (via its fourth ankyrin repeat). Interacts with PPP1CA only in the presence of PPP1R16B. In terms of processing, acylated. Acylation may be a prerequisite for conversion of the monomeric 37 kDa laminin receptor precursor (37LRP) to the mature dimeric 67 kDa laminin receptor (67LR), and may provide a mechanism for membrane association. Post-translationally, cleaved by stromelysin-3 (ST3) at the cell surface. Cleavage by stromelysin-3 may be a mechanism to alter cell-extracellular matrix interactions.

The protein resides in the cell membrane. It localises to the cytoplasm. The protein localises to the nucleus. Functionally, required for the assembly and/or stability of the 40S ribosomal subunit. Required for the processing of the 20S rRNA-precursor to mature 18S rRNA in a late step of the maturation of 40S ribosomal subunits. Also functions as a cell surface receptor for laminin. Plays a role in cell adhesion to the basement membrane and in the consequent activation of signaling transduction pathways. May play a role in cell fate determination and tissue morphogenesis. Also acts as a receptor for several other ligands, including the pathogenic prion protein, viruses, and bacteria. Acts as a PPP1R16B-dependent substrate of PPP1CA. The polypeptide is Small ribosomal subunit protein uS2 (Ovis aries (Sheep)).